The sequence spans 316 residues: 4-hydroxy-3-methylbut-2-enyl diphosphate reductase (316 aa).

C12 contributes to the [4Fe-4S] cluster binding site. (2E)-4-hydroxy-3-methylbut-2-enyl diphosphate-binding residues include H41 and H74. Dimethylallyl diphosphate-binding residues include H41 and H74. Isopentenyl diphosphate contacts are provided by H41 and H74. Position 96 (C96) interacts with [4Fe-4S] cluster. H124 lines the (2E)-4-hydroxy-3-methylbut-2-enyl diphosphate pocket. A dimethylallyl diphosphate-binding site is contributed by H124. Isopentenyl diphosphate is bound at residue H124. The Proton donor role is filled by E126. Residue T169 participates in (2E)-4-hydroxy-3-methylbut-2-enyl diphosphate binding. [4Fe-4S] cluster is bound at residue C199. (2E)-4-hydroxy-3-methylbut-2-enyl diphosphate-binding residues include S227, S228, N229, and S271. 4 residues coordinate dimethylallyl diphosphate: S227, S228, N229, and S271. Residues S227, S228, N229, and S271 each coordinate isopentenyl diphosphate.

This sequence belongs to the IspH family. [4Fe-4S] cluster is required as a cofactor.

The enzyme catalyses isopentenyl diphosphate + 2 oxidized [2Fe-2S]-[ferredoxin] + H2O = (2E)-4-hydroxy-3-methylbut-2-enyl diphosphate + 2 reduced [2Fe-2S]-[ferredoxin] + 2 H(+). It catalyses the reaction dimethylallyl diphosphate + 2 oxidized [2Fe-2S]-[ferredoxin] + H2O = (2E)-4-hydroxy-3-methylbut-2-enyl diphosphate + 2 reduced [2Fe-2S]-[ferredoxin] + 2 H(+). It participates in isoprenoid biosynthesis; dimethylallyl diphosphate biosynthesis; dimethylallyl diphosphate from (2E)-4-hydroxy-3-methylbutenyl diphosphate: step 1/1. Its pathway is isoprenoid biosynthesis; isopentenyl diphosphate biosynthesis via DXP pathway; isopentenyl diphosphate from 1-deoxy-D-xylulose 5-phosphate: step 6/6. Its function is as follows. Catalyzes the conversion of 1-hydroxy-2-methyl-2-(E)-butenyl 4-diphosphate (HMBPP) into a mixture of isopentenyl diphosphate (IPP) and dimethylallyl diphosphate (DMAPP). Acts in the terminal step of the DOXP/MEP pathway for isoprenoid precursor biosynthesis. The protein is 4-hydroxy-3-methylbut-2-enyl diphosphate reductase of Stenotrophomonas maltophilia (strain R551-3).